Here is a 335-residue protein sequence, read N- to C-terminus: Ankyrin repeat and SOCS box protein 1 (335 aa).

ANK repeat units lie at residues 36–68 (CEDTRLHDAAYVGDLQTLRSLLQEESYRSRINE), 77–106 (LPCTPLRIAATAGHGSCVDFLIRKGAEVDL), 110–139 (KGQTALYVAVVNGHLESTQILLEAGADPNG), 143–172 (HRSTPVYHASRVGRADILKALIRYGADVDV), 191–220 (LVVCPLYISAAYHNLQCFRLLLLAGANPDF), and 235–265 (SPGCVMDAVLRHGCEAAFVSLLVEFGANLNL). The SOCS box domain maps to 286–335 (LQVFKEARSVPRTLLCLCRVAVRRALGKHRLHLIPSLPLPDPIKKFLLHE).

The protein belongs to the ankyrin SOCS box (ASB) family. In terms of assembly, interacts with CUL5 and RNF7. Interacts with TAB2 and TAB3.

It is found in the cytoplasm. It participates in protein modification; protein ubiquitination. In terms of biological role, probable substrate-recognition component of a SCF-like ECS (Elongin-Cullin-SOCS-box protein) E3 ligase complex which mediates the ubiquitination and subsequent proteasomal degradation of target proteins. Mediates Notch-induced ubiquitination and degradation of TCF3/E2A and JAK2. Functions as a tumor suppressor by enhancing CHCHD3 'Lys-48'-linked ubiquitination, leading to inhibition of the CHCHD3/ROS signaling pathway. Suppresses TAB2-linked 'Lys-48' polyubiquitination and consequently facilitates the initiation of NF-kappa-B and MAPK signaling cascades. May play a role in testis development. The polypeptide is Ankyrin repeat and SOCS box protein 1 (ASB1) (Homo sapiens (Human)).